The chain runs to 480 residues: UDP-glucose 6-dehydrogenase 4 (480 aa).

NAD(+)-binding positions include Lys3–Ile20, Asp33, Arg38, Thr90, Thr128, and Glu161. Residues Glu157 to Glu161, Lys216, Lys216 to Leu223, Arg256 to Gly269, and Gly269 each bind substrate. The active-site Nucleophile is Cys272. An NAD(+)-binding site is contributed by Lys275. Residues Phe334 and Lys335 each contribute to the substrate site. Arg342 contacts NAD(+). A substrate-binding site is contributed by Arg447.

Belongs to the UDP-glucose/GDP-mannose dehydrogenase family.

It catalyses the reaction UDP-alpha-D-glucose + 2 NAD(+) + H2O = UDP-alpha-D-glucuronate + 2 NADH + 3 H(+). It functions in the pathway nucleotide-sugar biosynthesis; UDP-alpha-D-glucuronate biosynthesis; UDP-alpha-D-glucuronate from UDP-alpha-D-glucose: step 1/1. Its activity is regulated as follows. Inhibited by UDP-xylose. In terms of biological role, involved in the biosynthesis of UDP-glucuronic acid (UDP-GlcA), providing nucleotide sugars for cell-wall polymers. The chain is UDP-glucose 6-dehydrogenase 4 from Arabidopsis thaliana (Mouse-ear cress).